The chain runs to 74 residues: DNA gyrase inhibitor YacG (74 aa).

Zn(2+) is bound by residues Cys7, Cys10, Cys26, and Cys30.

This sequence belongs to the DNA gyrase inhibitor YacG family. Interacts with GyrB. Zn(2+) serves as cofactor.

Inhibits all the catalytic activities of DNA gyrase by preventing its interaction with DNA. Acts by binding directly to the C-terminal domain of GyrB, which probably disrupts DNA binding by the gyrase. The sequence is that of DNA gyrase inhibitor YacG from Shewanella denitrificans (strain OS217 / ATCC BAA-1090 / DSM 15013).